A 330-amino-acid chain; its full sequence is Phosphate acyltransferase (330 aa).

The protein belongs to the PlsX family. As to quaternary structure, homodimer. Probably interacts with PlsY.

It is found in the cytoplasm. It carries out the reaction a fatty acyl-[ACP] + phosphate = an acyl phosphate + holo-[ACP]. Its pathway is lipid metabolism; phospholipid metabolism. Functionally, catalyzes the reversible formation of acyl-phosphate (acyl-PO(4)) from acyl-[acyl-carrier-protein] (acyl-ACP). This enzyme utilizes acyl-ACP as fatty acyl donor, but not acyl-CoA. This chain is Phosphate acyltransferase, found in Teredinibacter turnerae (strain ATCC 39867 / T7901).